Here is an 833-residue protein sequence, read N- to C-terminus: Major vault protein (833 aa).

MVP repeat units follow at residues arginine 10 to proline 52, arginine 54 to glutamine 115, proline 119 to tyrosine 170, proline 171 to serine 223, glutamate 224 to asparagine 278, lysine 280 to glycine 328, lysine 329 to aspartate 380, and arginine 381 to threonine 433.

The vault ribonucleoprotein particle is a huge (400 A x 670 A) cage structure of 12.9 MDa. It consists of a dimer of half-vaults, with each half-vault comprising 39 identical major vault protein (MVP) chains, PARP4 and one or more vault RNAs (vRNAs).

It is found in the cytoplasm. The protein localises to the nucleus. Required for normal vault structure. Vaults are multi-subunit structures that may act as scaffolds for proteins involved in signal transduction. Vaults may also play a role in nucleo-cytoplasmic transport. This is Major vault protein from Leishmania braziliensis.